The following is a 902-amino-acid chain: AP-4 complex accessory subunit RUSC1 (902 aa).

4 disordered regions span residues 31 to 67 (ELQE…SNSP), 81 to 155 (LENR…PGTC), 189 to 227 (QDVP…KTEP), and 247 to 450 (KTTE…AQAG). The span at 94–112 (AASPSDPGCSSSLSSCSDL) shows a compositional bias: low complexity. The segment covering 249-261 (TENNNTGWKNNGN) has biased composition (low complexity). Positions 277-289 (WKTNTRITDSGSK) are enriched in polar residues. A compositionally biased stretch (basic and acidic residues) spans 291-309 (DAGKIDGGWRSDVSEEPVP). 2 stretches are compositionally biased toward pro residues: residues 381 to 390 (PAPPVPPRDP) and 398 to 407 (PPRPPPPPVP). Residues 433–450 (PAAGEEAPAAKEPGAQAG) show a composition bias toward low complexity. Positions 470–605 (MAEAQSGTGQ…FHAFILGLLN (136 aa)) are interaction with TRAF6. Residues 522–666 (DVGHLVLTTL…LTFHLDLLFE (145 aa)) enclose the RUN domain. Residues 606-672 (TKQLELWFSS…LLFEHHHHLP (67 aa)) form an interaction with IKBKG region. Disordered stretches follow at residues 706 to 729 (LRGT…PGSW) and 747 to 776 (GFPL…TDEM). Residues 844–902 (QTHRAVRALCDHTAARPDQLSFRRGEVLRVITTVDEDWLRCGRDGMEGLVPVGYTSLVL) form the SH3 domain.

In terms of assembly, associated component of the adapter-like complex 4 (AP-4). Interacts with IKBKG and TRAF6. Interacts with F-actin, acetylated actin, TUBB3, STX1A, KIF5B and KLC1. Phosphorylated on serine residues following nuclear translocation. In terms of processing, polyubiquitinated; polyubiquitination involves TRAF6. As to expression, predominantly expressed in brain.

Its subcellular location is the cytoplasm. The protein resides in the nucleus. It localises to the cytoskeleton. The protein localises to the cytoplasmic vesicle. It is found in the early endosome. Its subcellular location is the postsynaptic density. The protein resides in the golgi apparatus. In terms of biological role, associates with the adapter-like complex 4 (AP-4) and may therefore play a role in vesicular trafficking of proteins at the trans-Golgi network. Signaling adapter which plays a role in neuronal differentiation. Involved in regulation of NGF-dependent neurite outgrowth. May play a role in neuronal vesicular trafficking, specifically involving pre-synaptic membrane proteins. Seems to be involved in signaling pathways that are regulated by the prolonged activation of MAPK. Can regulate the polyubiquitination of IKBKG and thus may be involved in regulation of the NF-kappa-B pathway. This Homo sapiens (Human) protein is AP-4 complex accessory subunit RUSC1.